Consider the following 175-residue polypeptide: Major oleosin NAP-II (175 aa).

The tract at residues 1–47 is polar; sequence RRDQYPRDRDQYSMIGRDRDKYSMIGRDRDQYNMYGRDYSKSRQIAK. Repeats lie at residues 17–26 and 27–36; these read RDRDKYSMIG and RDRDQYNMYG. Positions 48 to 119 are hydrophobic; sequence AVTAVTAGGS…AAITVFSWIY (72 aa). 3 consecutive transmembrane segments (helical) span residues 56–76, 78–98, and 99–119; these read GSLL…LTVA, PLLV…ALLI, and TGFL…SWIY. Positions 151–175 are disordered; sequence AQYYGQQQTGGEDDRDRTRGTQHTT.

Belongs to the oleosin family.

It is found in the lipid droplet. The protein resides in the membrane. Its function is as follows. May have a structural role to stabilize the lipid body during desiccation of the seed by preventing coalescence of the oil. Probably interacts with both lipid and phospholipid moieties of lipid bodies. May also provide recognition signals for specific lipase anchorage in lipolysis during seedling growth. This chain is Major oleosin NAP-II, found in Brassica napus (Rape).